The sequence spans 156 residues: MKKLLSIFLMAFSLNAFAQTNLADVQLKDLNNQPVTLSQYKGKPVYVKMWASWCPICLAGLAEIDDLSAEKDRNFEVITIVSPDHKGEKDTADFIEWYKGLEYKNITVLLDEKGEIIDKARVRGYPFNLFLDSDLNLKKTVPGHLGAEQIRVFAEK.

The signal sequence occupies residues 1-18 (MKKLLSIFLMAFSLNAFA). The Thioredoxin domain occupies 19-156 (QTNLADVQLK…AEQIRVFAEK (138 aa)). The cysteines at positions 54 and 57 are disulfide-linked.

The protein belongs to the thioredoxin family.

This is an uncharacterized protein from Haemophilus influenzae (strain ATCC 51907 / DSM 11121 / KW20 / Rd).